The primary structure comprises 142 residues: Hemoglobin subunit alpha-5 (142 aa).

A Globin domain is found at Thr2–Arg142. His59 serves as a coordination point for O2. His88 contributes to the heme b binding site.

The protein belongs to the globin family. In terms of assembly, heterotetramer of two alpha chains and two beta chains. Red blood cells.

This is a larval (tadpole) alpha-globin. In Xenopus laevis (African clawed frog), this protein is Hemoglobin subunit alpha-5 (hba5).